A 445-amino-acid polypeptide reads, in one-letter code: Phosphoglucosamine mutase (445 aa).

Catalysis depends on serine 102, which acts as the Phosphoserine intermediate. Residues serine 102, aspartate 240, aspartate 242, and aspartate 244 each contribute to the Mg(2+) site. Position 102 is a phosphoserine (serine 102).

Belongs to the phosphohexose mutase family. The cofactor is Mg(2+). Activated by phosphorylation.

It catalyses the reaction alpha-D-glucosamine 1-phosphate = D-glucosamine 6-phosphate. Functionally, catalyzes the conversion of glucosamine-6-phosphate to glucosamine-1-phosphate. The polypeptide is Phosphoglucosamine mutase (Mycolicibacterium gilvum (strain PYR-GCK) (Mycobacterium gilvum (strain PYR-GCK))).